The primary structure comprises 429 residues: Glutamate-1-semialdehyde 2,1-aminomutase 2 (429 aa).

The residue at position 268 (lysine 268) is an N6-(pyridoxal phosphate)lysine.

It belongs to the class-III pyridoxal-phosphate-dependent aminotransferase family. HemL subfamily. Homodimer. Requires pyridoxal 5'-phosphate as cofactor.

Its subcellular location is the cytoplasm. It catalyses the reaction (S)-4-amino-5-oxopentanoate = 5-aminolevulinate. The protein operates within porphyrin-containing compound metabolism; protoporphyrin-IX biosynthesis; 5-aminolevulinate from L-glutamyl-tRNA(Glu): step 2/2. The protein is Glutamate-1-semialdehyde 2,1-aminomutase 2 of Staphylococcus epidermidis (strain ATCC 35984 / DSM 28319 / BCRC 17069 / CCUG 31568 / BM 3577 / RP62A).